Here is a 338-residue protein sequence, read N- to C-terminus: Ketol-acid reductoisomerase (NADP(+)) (338 aa).

The KARI N-terminal Rossmann domain maps to 1-181; the sequence is MKVFYDKDCD…GGGRAGIIET (181 aa). NADP(+)-binding positions include 24–27, arginine 47, and serine 52; that span reads YGSQ. Residue histidine 107 is part of the active site. Position 133 (glycine 133) interacts with NADP(+). Residues 182–327 form the KARI C-terminal knotted domain; it reads DFREETETDL…GKLRAMMPWI (146 aa). Residues aspartate 190, glutamate 194, glutamate 226, and glutamate 230 each coordinate Mg(2+). Serine 251 is a binding site for substrate.

It belongs to the ketol-acid reductoisomerase family. Mg(2+) serves as cofactor.

The enzyme catalyses (2R)-2,3-dihydroxy-3-methylbutanoate + NADP(+) = (2S)-2-acetolactate + NADPH + H(+). The catalysed reaction is (2R,3R)-2,3-dihydroxy-3-methylpentanoate + NADP(+) = (S)-2-ethyl-2-hydroxy-3-oxobutanoate + NADPH + H(+). Its pathway is amino-acid biosynthesis; L-isoleucine biosynthesis; L-isoleucine from 2-oxobutanoate: step 2/4. The protein operates within amino-acid biosynthesis; L-valine biosynthesis; L-valine from pyruvate: step 2/4. Involved in the biosynthesis of branched-chain amino acids (BCAA). Catalyzes an alkyl-migration followed by a ketol-acid reduction of (S)-2-acetolactate (S2AL) to yield (R)-2,3-dihydroxy-isovalerate. In the isomerase reaction, S2AL is rearranged via a Mg-dependent methyl migration to produce 3-hydroxy-3-methyl-2-ketobutyrate (HMKB). In the reductase reaction, this 2-ketoacid undergoes a metal-dependent reduction by NADPH to yield (R)-2,3-dihydroxy-isovalerate. This Bordetella petrii (strain ATCC BAA-461 / DSM 12804 / CCUG 43448) protein is Ketol-acid reductoisomerase (NADP(+)).